The chain runs to 252 residues: 5'-nucleotidase SurE (252 aa).

A divalent metal cation-binding residues include aspartate 8, aspartate 9, serine 39, and asparagine 95.

The protein belongs to the SurE nucleotidase family. Requires a divalent metal cation as cofactor.

The protein localises to the cytoplasm. The catalysed reaction is a ribonucleoside 5'-phosphate + H2O = a ribonucleoside + phosphate. Nucleotidase that shows phosphatase activity on nucleoside 5'-monophosphates. The polypeptide is 5'-nucleotidase SurE (Clostridium botulinum (strain Kyoto / Type A2)).